The following is a 1415-amino-acid chain: DNA-directed RNA polymerase subunit beta' (1415 aa).

The Zn(2+) site is built by C71, C73, C86, and C89. Mg(2+) is bound by residues D461, D463, and D465. Zn(2+) is bound by residues C815, C889, C896, and C899.

This sequence belongs to the RNA polymerase beta' chain family. In terms of assembly, the RNAP catalytic core consists of 2 alpha, 1 beta, 1 beta' and 1 omega subunit. When a sigma factor is associated with the core the holoenzyme is formed, which can initiate transcription. Requires Mg(2+) as cofactor. Zn(2+) serves as cofactor.

The catalysed reaction is RNA(n) + a ribonucleoside 5'-triphosphate = RNA(n+1) + diphosphate. Functionally, DNA-dependent RNA polymerase catalyzes the transcription of DNA into RNA using the four ribonucleoside triphosphates as substrates. This chain is DNA-directed RNA polymerase subunit beta', found in Haemophilus influenzae (strain ATCC 51907 / DSM 11121 / KW20 / Rd).